The primary structure comprises 541 residues: Chaperonin GroEL (541 aa).

ATP contacts are provided by residues 29-32, 86-90, G413, 478-480, and D494; these read TLGP, DGTTT, and NAA.

This sequence belongs to the chaperonin (HSP60) family. In terms of assembly, forms a cylinder of 14 subunits composed of two heptameric rings stacked back-to-back. Interacts with the co-chaperonin GroES.

The protein resides in the cytoplasm. The enzyme catalyses ATP + H2O + a folded polypeptide = ADP + phosphate + an unfolded polypeptide.. In terms of biological role, together with its co-chaperonin GroES, plays an essential role in assisting protein folding. The GroEL-GroES system forms a nano-cage that allows encapsulation of the non-native substrate proteins and provides a physical environment optimized to promote and accelerate protein folding. In Agathobacter rectalis (strain ATCC 33656 / DSM 3377 / JCM 17463 / KCTC 5835 / VPI 0990) (Eubacterium rectale), this protein is Chaperonin GroEL.